The primary structure comprises 198 residues: Recombination protein RecR (198 aa).

The segment at 57–72 adopts a C4-type zinc-finger fold; it reads CSVCGHITENDPCYIC. In terms of domain architecture, Toprim spans 80–175; the sequence is SVICVVEDDK…KVTRLAQGLS (96 aa).

It belongs to the RecR family.

May play a role in DNA repair. It seems to be involved in an RecBC-independent recombinational process of DNA repair. It may act with RecF and RecO. The sequence is that of Recombination protein RecR from Staphylococcus aureus (strain Mu3 / ATCC 700698).